The primary structure comprises 425 residues: Enolase (425 aa).

A (2R)-2-phosphoglycerate-binding site is contributed by Q163. Catalysis depends on E205, which acts as the Proton donor. 3 residues coordinate Mg(2+): D242, E285, and D312. K337, R366, S367, and K388 together coordinate (2R)-2-phosphoglycerate. Residue K337 is the Proton acceptor of the active site.

Belongs to the enolase family. Mg(2+) serves as cofactor.

It is found in the cytoplasm. Its subcellular location is the secreted. It localises to the cell surface. The enzyme catalyses (2R)-2-phosphoglycerate = phosphoenolpyruvate + H2O. Its pathway is carbohydrate degradation; glycolysis; pyruvate from D-glyceraldehyde 3-phosphate: step 4/5. In terms of biological role, catalyzes the reversible conversion of 2-phosphoglycerate (2-PG) into phosphoenolpyruvate (PEP). It is essential for the degradation of carbohydrates via glycolysis. The chain is Enolase from Cereibacter sphaeroides (strain ATCC 17025 / ATH 2.4.3) (Rhodobacter sphaeroides).